An 859-amino-acid polypeptide reads, in one-letter code: Villin-like protein (859 aa).

Gelsolin-like repeat units follow at residues 24-76, 148-188, 264-308, 401-450, 521-561, and 624-665; these read LKML…EARE, VSAT…SEKA, LVVQ…QEKK, LQRQ…EDTK, TRTM…DQRE, and LVLT…WKKE. Positions 793–859 constitute an HP domain; that stretch reads SMVNGSLPRE…QQAKKKLGFF (67 aa).

This sequence belongs to the villin/gelsolin family.

Functionally, possible tumor suppressor. The polypeptide is Villin-like protein (Mus musculus (Mouse)).